The primary structure comprises 258 residues: Type III pantothenate kinase (258 aa).

An ATP-binding site is contributed by 6–13; sequence DVGNTNTV. Substrate is bound by residues Tyr-100 and 107–110; that span reads GADR. Asp-109 acts as the Proton acceptor in catalysis. Asp-129 provides a ligand contact to K(+). Thr-132 contacts ATP. Residue Thr-184 participates in substrate binding.

This sequence belongs to the type III pantothenate kinase family. Homodimer. It depends on NH4(+) as a cofactor. Requires K(+) as cofactor.

The protein localises to the cytoplasm. The enzyme catalyses (R)-pantothenate + ATP = (R)-4'-phosphopantothenate + ADP + H(+). Its pathway is cofactor biosynthesis; coenzyme A biosynthesis; CoA from (R)-pantothenate: step 1/5. Functionally, catalyzes the phosphorylation of pantothenate (Pan), the first step in CoA biosynthesis. The polypeptide is Type III pantothenate kinase (Geobacillus sp. (strain WCH70)).